A 192-amino-acid chain; its full sequence is Ras-like protein RAS2 (192 aa).

A GTP-binding site is contributed by 15-22 (GGGGVGKS). An Effector region motif is present at residues 37-45 (YDPTIEDSY). Residues 62–66 (DTAGQ) and 121–124 (NKSD) contribute to the GTP site. At Cys-189 the chain carries Cysteine methyl ester. Residue Cys-189 is the site of S-geranylgeranyl cysteine attachment. Residues 190–192 (IVL) constitute a propeptide, removed in mature form.

This sequence belongs to the small GTPase superfamily. Ras family.

The protein resides in the cell membrane. The catalysed reaction is GTP + H2O = GDP + phosphate + H(+). Its activity is regulated as follows. Alternates between an inactive form bound to GDP and an active form bound to GTP. Activated by a guanine nucleotide-exchange factor (GEF) and inactivated by a GTPase-activating protein (GAP). Its function is as follows. Ras proteins bind GDP/GTP and possess intrinsic GTPase activity. This is Ras-like protein RAS2 (RAS2) from Hydra vulgaris (Hydra).